A 130-amino-acid chain; its full sequence is uncharacterized protein (130 aa).

A signal peptide spans 1-23 (MINRKVVYALSALLLFVYSYAFI).

This is an uncharacterized protein from Aquifex aeolicus (strain VF5).